A 492-amino-acid chain; its full sequence is Probable ATP-citrate synthase subunit 2 (492 aa).

At Ser24 the chain carries Phosphoserine.

In the N-terminal section; belongs to the succinate/malate CoA ligase beta subunit family. The protein in the C-terminal section; belongs to the succinate/malate CoA ligase alpha subunit family. In terms of assembly, composed of two subunits.

Its subcellular location is the cytoplasm. It localises to the nucleus. It carries out the reaction oxaloacetate + acetyl-CoA + ADP + phosphate = citrate + ATP + CoA. ATP citrate-lyase is the primary enzyme responsible for the synthesis of cytosolic acetyl-CoA. Has a central role in de novo lipid synthesis. The polypeptide is Probable ATP-citrate synthase subunit 2 (Schizosaccharomyces pombe (strain 972 / ATCC 24843) (Fission yeast)).